The chain runs to 251 residues: Hydroxyacylglutathione hydrolase (251 aa).

Positions 53, 55, 57, 58, 110, 127, and 165 each coordinate Zn(2+).

This sequence belongs to the metallo-beta-lactamase superfamily. Glyoxalase II family. Monomer. Zn(2+) is required as a cofactor.

It catalyses the reaction an S-(2-hydroxyacyl)glutathione + H2O = a 2-hydroxy carboxylate + glutathione + H(+). The protein operates within secondary metabolite metabolism; methylglyoxal degradation; (R)-lactate from methylglyoxal: step 2/2. Functionally, thiolesterase that catalyzes the hydrolysis of S-D-lactoyl-glutathione to form glutathione and D-lactic acid. The chain is Hydroxyacylglutathione hydrolase from Escherichia coli O45:K1 (strain S88 / ExPEC).